Consider the following 170-residue polypeptide: uncharacterized protein (170 aa).

The protein belongs to the mimivirus L223/L227/L812 family.

This is an uncharacterized protein from Acanthamoeba polyphaga mimivirus (APMV).